The primary structure comprises 149 residues: NADH-quinone oxidoreductase subunit A (149 aa).

Helical transmembrane passes span 16–36 (FGIF…GAWF), 68–88 (FYLV…LFAW), and 98–118 (LGFI…VYLV).

The protein belongs to the complex I subunit 3 family. In terms of assembly, NDH-1 is composed of 13 different subunits. Subunits NuoA, H, J, K, L, M, N constitute the membrane sector of the complex.

It localises to the cell inner membrane. The enzyme catalyses a quinone + NADH + 5 H(+)(in) = a quinol + NAD(+) + 4 H(+)(out). In terms of biological role, NDH-1 shuttles electrons from NADH, via FMN and iron-sulfur (Fe-S) centers, to quinones in the respiratory chain. The immediate electron acceptor for the enzyme in this species is believed to be ubiquinone. Couples the redox reaction to proton translocation (for every two electrons transferred, four hydrogen ions are translocated across the cytoplasmic membrane), and thus conserves the redox energy in a proton gradient. The chain is NADH-quinone oxidoreductase subunit A from Cronobacter sakazakii (strain ATCC BAA-894) (Enterobacter sakazakii).